We begin with the raw amino-acid sequence, 253 residues long: 5'/3'-nucleotidase SurE (253 aa).

A divalent metal cation contacts are provided by Asp-8, Asp-9, Ser-39, and Asn-92.

This sequence belongs to the SurE nucleotidase family. The cofactor is a divalent metal cation.

The protein resides in the cytoplasm. It carries out the reaction a ribonucleoside 5'-phosphate + H2O = a ribonucleoside + phosphate. It catalyses the reaction a ribonucleoside 3'-phosphate + H2O = a ribonucleoside + phosphate. The catalysed reaction is [phosphate](n) + H2O = [phosphate](n-1) + phosphate + H(+). Functionally, nucleotidase with a broad substrate specificity as it can dephosphorylate various ribo- and deoxyribonucleoside 5'-monophosphates and ribonucleoside 3'-monophosphates with highest affinity to 3'-AMP. Also hydrolyzes polyphosphate (exopolyphosphatase activity) with the preference for short-chain-length substrates (P20-25). Might be involved in the regulation of dNTP and NTP pools, and in the turnover of 3'-mononucleotides produced by numerous intracellular RNases (T1, T2, and F) during the degradation of various RNAs. The polypeptide is 5'/3'-nucleotidase SurE (Erwinia tasmaniensis (strain DSM 17950 / CFBP 7177 / CIP 109463 / NCPPB 4357 / Et1/99)).